Here is a 486-residue protein sequence, read N- to C-terminus: Glutamyl-tRNA(Gln) amidotransferase subunit A (486 aa).

Active-site charge relay system residues include lysine 74 and serine 149. Residue serine 173 is the Acyl-ester intermediate of the active site.

Belongs to the amidase family. GatA subfamily. As to quaternary structure, heterotrimer of A, B and C subunits.

It catalyses the reaction L-glutamyl-tRNA(Gln) + L-glutamine + ATP + H2O = L-glutaminyl-tRNA(Gln) + L-glutamate + ADP + phosphate + H(+). Its function is as follows. Allows the formation of correctly charged Gln-tRNA(Gln) through the transamidation of misacylated Glu-tRNA(Gln) in organisms which lack glutaminyl-tRNA synthetase. The reaction takes place in the presence of glutamine and ATP through an activated gamma-phospho-Glu-tRNA(Gln). This is Glutamyl-tRNA(Gln) amidotransferase subunit A from Prochlorococcus marinus (strain NATL2A).